A 292-amino-acid polypeptide reads, in one-letter code: Ribosomal protein L11 methyltransferase (292 aa).

Positions 136, 159, 181, and 228 each coordinate S-adenosyl-L-methionine.

It belongs to the methyltransferase superfamily. PrmA family.

The protein localises to the cytoplasm. The enzyme catalyses L-lysyl-[protein] + 3 S-adenosyl-L-methionine = N(6),N(6),N(6)-trimethyl-L-lysyl-[protein] + 3 S-adenosyl-L-homocysteine + 3 H(+). Methylates ribosomal protein L11. This Rhizobium johnstonii (strain DSM 114642 / LMG 32736 / 3841) (Rhizobium leguminosarum bv. viciae) protein is Ribosomal protein L11 methyltransferase.